Consider the following 379-residue polypeptide: MLKVIVETKTLVQALGFASSVVEKRNIISELANIKLLAKDGLLELSSTNMDLYLSQKIGVQVVSEGELTVSTKTLNDIVKKLPDSELTLTDLGTTGLEITGKNCRFNLFTLPVESFPVMDNINPEASFKISCAEFAKIIESTKFSVSLDETRYNLNGIYLHVKDSEFYAASTDGHRLSVSSVVLAEKIEDFGVILPQKSAEEILKIVKDSKNANADIEILLSSNKIKFICNENVIMLSKLIDGTFPDYSSFIPENSSSKLVINRKIFADTIERIAIITVEKFRAVKLSLSGEALEISAIGEARGNAKEVINSSKETENFYEYSGETNLDIGFNPQYLEDVLKAIKSDLVELYFSSVSAPVLIKFPESPKDIFVVMPVKV.

This sequence belongs to the beta sliding clamp family. In terms of assembly, forms a ring-shaped head-to-tail homodimer around DNA which binds and tethers DNA polymerases and other proteins to the DNA. The DNA replisome complex has a single clamp-loading complex (3 tau and 1 each of delta, delta', psi and chi subunits) which binds 3 Pol III cores (1 core on the leading strand and 2 on the lagging strand) each with a beta sliding clamp dimer. Additional proteins in the replisome are other copies of gamma, psi and chi, Ssb, DNA helicase and RNA primase.

The protein resides in the cytoplasm. Confers DNA tethering and processivity to DNA polymerases and other proteins. Acts as a clamp, forming a ring around DNA (a reaction catalyzed by the clamp-loading complex) which diffuses in an ATP-independent manner freely and bidirectionally along dsDNA. Initially characterized for its ability to contact the catalytic subunit of DNA polymerase III (Pol III), a complex, multichain enzyme responsible for most of the replicative synthesis in bacteria; Pol III exhibits 3'-5' exonuclease proofreading activity. The beta chain is required for initiation of replication as well as for processivity of DNA replication. This Rickettsia bellii (strain RML369-C) protein is Beta sliding clamp (dnaN).